Consider the following 612-residue polypeptide: Peroxisomal targeting signal receptor (612 aa).

Met1 carries the post-translational modification N-acetylmethionine. The segment at Met1 to Lys24 is disordered. Residue Cys6 forms a Glycyl cysteine thioester (Cys-Gly) (interchain with G-Cter in ubiquitin) linkage. Residues Ser7 to Asn29 form an amphipathic helix 1 (AH1) region. Residues Lys18 and Lys24 each participate in a glycyl lysine isopeptide (Lys-Gly) (interchain with G-Cter in ubiquitin) cross-link. Residue Ser61 is modified to Phosphoserine. The stretch at Asn64–Ser97 is one TPR 1 repeat. Residues Arg70–Thr104 are amphipathic helix 2 (AH2). Residues Trp120–Phe124 carry the WxxxF/Y motif 1 motif. The interval Ser129–Ala151 is disordered. The segment at Pro158–Ser174 is amphipathic helix 3 (AH3). Residues Ala182–Gln202 form a disordered region. The WxxxF/Y motif 2 signature appears at Trp204 to Phe208. An amphipathic helix 4 (AH4) region spans residues Phe257–Pro273. TPR repeat units follow at residues Pro313 to His346, Val347 to Asn380, Leu381 to Arg418, Ile419 to Asp456, Pro457 to Asp490, Glu491 to Phe524, and Val525 to Asn558.

The protein belongs to the peroxisomal targeting signal receptor family. As to quaternary structure, interacts (via WxxxF/Y and LVxEF motifs) with PEX14; promoting translocation through the PEX13-PEX14 docking complex. Monoubiquitinated at Cys-6 by PEX2 during PEX5 passage through the retrotranslocation channel: monoubiquitination acts as a signal for PEX5 extraction and is required for proper export from peroxisomes and recycling. Ubiquitination at Cys-6 is UBC4-independent but requires the presence of PEX4. When PEX5 recycling is compromised, polyubiquitinated at Lys-18 and Lys-24 by PEX10 during its passage through the retrotranslocation channel, leading to its degradation. Ubiquitination at Lys-18 and Lys-24 are UBC4-dependent. Monoubiquitination at Cys-6 and polyubiquitination at Lys-18 and Lys-24 are removed by UBP15 in the cytosol, resetting PEX5 for a subsequent import cycle.

It is found in the cytoplasm. Its subcellular location is the cytosol. It localises to the peroxisome matrix. Receptor that mediates peroxisomal import of proteins containing a C-terminal PTS1-type tripeptide peroxisomal targeting signal (SKL-type). Binds to cargo proteins containing a PTS1 peroxisomal targeting signal in the cytosol, and translocates them into the peroxisome matrix by passing through the PEX13-PEX14 docking complex along with cargo proteins. PEX5 receptor is then retrotranslocated into the cytosol, leading to release of bound cargo in the peroxisome matrix, and reset for a subsequent peroxisome import cycle. This chain is Peroxisomal targeting signal receptor, found in Saccharomyces cerevisiae (strain ATCC 204508 / S288c) (Baker's yeast).